A 553-amino-acid chain; its full sequence is 5'-nucleotidase (553 aa).

The signal sequence occupies residues 1–21 (MKQGLILKSVLSAAIIASLAG). Residue Cys-22 is the site of N-palmitoyl cysteine attachment. Cys-22 carries S-diacylglycerol cysteine lipidation. A divalent metal cation-binding residues include Asp-45, His-47, Asp-88, Asn-120, His-221, His-256, and Gln-258. Substrate contacts are provided by residues Phe-432 and 501-507 (FNAAGGD).

This sequence belongs to the 5'-nucleotidase family. The cofactor is chloride. Requires Mg(2+) as cofactor.

The protein localises to the cell outer membrane. The catalysed reaction is a ribonucleoside 5'-phosphate + H2O = a ribonucleoside + phosphate. Its function is as follows. Degradation of extracellular 5'-nucleotides for nutritional needs. The sequence is that of 5'-nucleotidase (nutA) from Vibrio cholerae serotype O1 (strain ATCC 39315 / El Tor Inaba N16961).